Reading from the N-terminus, the 243-residue chain is Probable transcriptional regulator ycf27 (243 aa).

Residues 7–120 (KILVVDDEAS…ELEARIRSVL (114 aa)) form the Response regulatory domain. A 4-aspartylphosphate modification is found at Asp-56. A DNA-binding region (H-T-H motif) is located at residues 76-94 (DVPIIMLTALGEVCDRITG). The ompR/PhoB-type DNA-binding region spans 135–236 (SGIISIGFLK…ARGTGYLFQR (102 aa)).

The protein localises to the plastid. The protein resides in the chloroplast. In terms of biological role, probable promoter-specific protein mediating the interaction between DNA and RNA polymerase. The sequence is that of Probable transcriptional regulator ycf27 (ycf27) from Pyropia yezoensis (Susabi-nori).